We begin with the raw amino-acid sequence, 524 residues long: Inosine-5'-monophosphate dehydrogenase (524 aa).

2 CBS domains span residues 121–180 (FILD…NTPV) and 184–242 (MTPR…PLAS). NAD(+) is bound by residues 280–282 (DSS) and 330–332 (GMG). K(+) contacts are provided by Gly-332 and Gly-334. Ser-335 lines the IMP pocket. K(+) is bound at residue Cys-337. Cys-337 acts as the Thioimidate intermediate in catalysis. Residues 370 to 372 (DGG), 393 to 394 (GG), and 417 to 421 (YRGMG) each bind IMP. The active-site Proton acceptor is Arg-439. Gln-451 is a binding site for IMP. K(+) is bound by residues Glu-510 and Gly-511.

Belongs to the IMPDH/GMPR family. In terms of assembly, homotetramer. The cofactor is K(+).

It localises to the cytoplasm. The enzyme catalyses IMP + NAD(+) + H2O = XMP + NADH + H(+). It participates in purine metabolism; XMP biosynthesis via de novo pathway; XMP from IMP: step 1/1. Mycophenolic acid (MPA) is a non-competitive inhibitor that prevents formation of the closed enzyme conformation by binding to the same site as the amobile flap. In contrast, mizoribine monophosphate (MZP) is a competitive inhibitor that induces the closed conformation. MPA is a potent inhibitor of mammalian IMPDHs but a poor inhibitor of the bacterial enzymes. MZP is a more potent inhibitor of bacterial IMPDH. Catalyzes the conversion of inosine 5'-phosphate (IMP) to xanthosine 5'-phosphate (XMP), the first committed and rate-limiting step in the de novo synthesis of guanine nucleotides, and therefore plays an important role in the regulation of cell growth. This chain is Inosine-5'-monophosphate dehydrogenase (gua1), found in Schizosaccharomyces pombe (strain 972 / ATCC 24843) (Fission yeast).